Reading from the N-terminus, the 491-residue chain is Probable glycine dehydrogenase (decarboxylating) subunit 2 (491 aa).

Position 273 is an N6-(pyridoxal phosphate)lysine (lysine 273).

Belongs to the GcvP family. C-terminal subunit subfamily. As to quaternary structure, the glycine cleavage system is composed of four proteins: P, T, L and H. In this organism, the P 'protein' is a heterodimer of two subunits. Pyridoxal 5'-phosphate is required as a cofactor.

The enzyme catalyses N(6)-[(R)-lipoyl]-L-lysyl-[glycine-cleavage complex H protein] + glycine + H(+) = N(6)-[(R)-S(8)-aminomethyldihydrolipoyl]-L-lysyl-[glycine-cleavage complex H protein] + CO2. The glycine cleavage system catalyzes the degradation of glycine. The P protein binds the alpha-amino group of glycine through its pyridoxal phosphate cofactor; CO(2) is released and the remaining methylamine moiety is then transferred to the lipoamide cofactor of the H protein. This is Probable glycine dehydrogenase (decarboxylating) subunit 2 from Bacillus cereus (strain B4264).